A 303-amino-acid chain; its full sequence is ATP synthase gamma chain (303 aa).

Belongs to the ATPase gamma chain family. F-type ATPases have 2 components, CF(1) - the catalytic core - and CF(0) - the membrane proton channel. CF(1) has five subunits: alpha(3), beta(3), gamma(1), delta(1), epsilon(1). CF(0) has three main subunits: a, b and c.

It localises to the cell inner membrane. Produces ATP from ADP in the presence of a proton gradient across the membrane. The gamma chain is believed to be important in regulating ATPase activity and the flow of protons through the CF(0) complex. The sequence is that of ATP synthase gamma chain from Elusimicrobium minutum (strain Pei191).